A 142-amino-acid polypeptide reads, in one-letter code: Hemoglobin subunit alpha-A (142 aa).

Residues 2–142 (VLSAADKTNV…VGAVLTAKYR (141 aa)) enclose the Globin domain. His59 serves as a coordination point for O2. Position 88 (His88) interacts with heme b.

Belongs to the globin family. Heterotetramer of two alpha chains and two beta chains. Red blood cells.

Involved in oxygen transport from the lung to the various peripheral tissues. The sequence is that of Hemoglobin subunit alpha-A (HBAA) from Mareca penelope (Eurasian wigeon).